A 1020-amino-acid polypeptide reads, in one-letter code: Glucan endo-1,3-beta-D-glucosidase (1020 aa).

The signal sequence occupies residues 1–25; that stretch reads MKGKNVQLLFALVVIILLFPTGASA. Positions 28–251 are beta-sandwich subdomain; that stretch reads HAVSVGKGSY…ADYIAIAKLP (224 aa). A GH81 domain is found at 28–722; it reads HAVSVGKGSY…HWIHNLAELG (695 aa). Positions 252–350 are alpha/beta subdomain; sequence EKDGNMLAKF…EGKRFTTELT (99 aa). The interval 360 to 722 is (alpha/beta)6 barrel subdomain; that stretch reads DLGDYDRERL…HWIHNLAELG (363 aa). 11 residues coordinate (1,3-beta-D-glucosyl)n: Y387, K391, H458, D466, H470, D530, N540, E542, E546, E699, and R704. D466 is a catalytic residue. Active-site residues include E542 and E546. The disordered stretch occupies residues 771 to 790; that stretch reads HSFNIGNGDGPTNPDPSEPD. A CBM6 domain is found at 796-922; that stretch reads ERIQAEAYDA…LMNVNWFVFR (127 aa). The (1,3-beta-D-glucosyl)n site is built by E812, W825, D853, N878, D912, and N915. The CBM56 domain occupies 928–1020; sequence NGDSHTHPDY…YTTEWFTYSR (93 aa).

The protein belongs to the glycosyl hydrolase 81 family.

Its subcellular location is the secreted. The enzyme catalyses Hydrolysis of (1-&gt;3)-beta-D-glucosidic linkages in (1-&gt;3)-beta-D-glucans.. In terms of biological role, cleaves internal linkages in 1,3-beta-glucan. May contribute to plant biomass degradation. The protein is Glucan endo-1,3-beta-D-glucosidase of Halalkalibacterium halodurans (strain ATCC BAA-125 / DSM 18197 / FERM 7344 / JCM 9153 / C-125) (Bacillus halodurans).